Consider the following 436-residue polypeptide: GTPase Der (436 aa).

2 consecutive EngA-type G domains span residues 4–167 (PTVA…PVEE) and 175–351 (IRFS…ESQN). Residues 10-17 (GRPNVGKS), 57-61 (DTGGI), 119-122 (NKVD), 181-188 (GRPNVGKS), 229-233 (DTAGM), and 294-297 (NKWD) contribute to the GTP site. A KH-like domain is found at 352–436 (KRIPSAVLND…PINLIARKRK (85 aa)).

This sequence belongs to the TRAFAC class TrmE-Era-EngA-EngB-Septin-like GTPase superfamily. EngA (Der) GTPase family. Associates with the 50S ribosomal subunit.

GTPase that plays an essential role in the late steps of ribosome biogenesis. The sequence is that of GTPase Der from Streptococcus agalactiae serotype Ia (strain ATCC 27591 / A909 / CDC SS700).